The chain runs to 275 residues: MSTLDEVLALLRTIAPSGDETELTADTLLFSSGLLDSLALEELHVAIEERWAPIPPMELARANFDTPAAIAATVARITHEETPVSVVRNLLSDSGRLTADLAPDAMGAGAQLLFDTWHAGGTTLSCGNGGSASTASHFAADLAKLTIVPGQRRMRTLCLNDNASAFSAWTNDEGFPVVYREQAEPWLEPTATLVAFSVHGGSRGGEVSANLPAVARLAKERGAAVVAVTGFDGGALGDLADVHINIPHATEPVATPLIESLHVLVHHALCVAHAP.

A Carrier domain is found at 1 to 78; sequence MSTLDEVLAL…AIAATVARIT (78 aa). Serine 37 carries the post-translational modification O-(pantetheine 4'-phosphoryl)serine. One can recognise an SIS domain in the interval 113 to 275; the sequence is LFDTWHAGGT…HHALCVAHAP (163 aa).

It functions in the pathway antibiotic biosynthesis; lincomycin biosynthesis. The chain is Lincomycin biosynthesis protein LmbN (lmbN) from Streptomyces lincolnensis.